Reading from the N-terminus, the 1177-residue chain is MKKLLKKSKFWWFLLCGLSVSTILVACSTPTNSALQTVFSPTSTNFFHGQKGSLKEGLITALKTPSANKHFVIGPLLKALEAWYENNEDKAINKFLKDTKKNVDDQYKNTVNGLISPPRNRAVFIQQDLLDKSGGSEASWKSQQLFNQLISDFTAKLFAKDFLVYKPNGQLSTGPYIYDELSQPEKWKDFGFQEPRFSETNDALFAKLQAQIFNLWVEYTDPTLISQATFKYAAPQQGLGQVYNTEKLKDKLTPSYAFPFFPKDGEIPQNQNVGNKRWEQLIEGKDGLNTAKTGLEKYILDQNQGNLIDFPTTLSDNTQTKQIVDSLNIVDQLEAANLGASLNLKLDLLNQDKDQLPTIKELNKELNNTIVVESTKIENHTKSNTLFCEHNTTDSSQNNLKSLIKDAFISSNDSSNLGKLAKQIHQTTTSDMMVSTKASSSTTSSYLVWDAAIPNNKTNNGASTVSANCANATVQNTSHNSNNQLKLRLVRNGEGVAVIGIDGGSYYLTKNSSSKTERDIEKQKQFLMWRAFQAKTNTFKNSLYSFSFPLNETLKTWFEKNQELILVNALINTDFQKKDKGSDAMQKAFNDYKELMQKFAPVALATNVIRDLFLQMDALDNKLTSRTTELNTNVNQINPTPWLNGLSSHLPYVRKSGHYEKLNNYFLFLITKTLWKKVGSEKINISENNNKLKTTKADVDKIRDEILSDINNKVTEFVNQLKVTEKSKPNFSNIILVDINNDQSLTNSANWSLNALLDVTTVNPLSFALLKNAFTSNQQFEKAKKLFEEIKSKNGSSSTSSSSDADSLAKVISNYYYMTWSKLTNKAMYGNPNNGNIDELFKKAFLESVDESGFNVNFKAVIDHYRFIFTLQWLIENNLKNFKDILQANLKYGEIAYIAYDKNIISNNTNNPQGIFGSVFNYENDEHATTANANQTIDPNNFFFKTKTSPNTTPATTMLSTRQAVSTSNNGTYGFTGLNTTNSSMLENNTNQALLNHIAANSLKQYGSKDDLKKFISETKDQLVLDNIARQLSRLTPSSSSSNGKTLSAYFQVDAINNSALDFKAKQALLLAVLDQYSSYFNSSNSPSISKRSTQTNQKFSEFNFGGDSYNYLQFTKSDIDSLSLTSSTNIESDIVAALVLFQASDTGTQQLALSAIEKPQFRIGDKRIQSGLNLLK.

Positions 1 to 26 (MKKLLKKSKFWWFLLCGLSVSTILVA) are cleaved as a signal peptide. The N-palmitoyl cysteine moiety is linked to residue cysteine 27. Residue cysteine 27 is the site of S-diacylglycerol cysteine attachment.

This sequence belongs to the MG307/MG309/MG338 family.

The protein localises to the cell membrane. This is an uncharacterized protein from Mycoplasma genitalium (strain ATCC 33530 / DSM 19775 / NCTC 10195 / G37) (Mycoplasmoides genitalium).